We begin with the raw amino-acid sequence, 301 residues long: tRNA dimethylallyltransferase (301 aa).

12–19 (GPTASGKT) serves as a coordination point for ATP. A substrate-binding site is contributed by 14–19 (TASGKT). The interval 37–40 (DSLS) is interaction with substrate tRNA.

The protein belongs to the IPP transferase family. As to quaternary structure, monomer. It depends on Mg(2+) as a cofactor.

The enzyme catalyses adenosine(37) in tRNA + dimethylallyl diphosphate = N(6)-dimethylallyladenosine(37) in tRNA + diphosphate. In terms of biological role, catalyzes the transfer of a dimethylallyl group onto the adenine at position 37 in tRNAs that read codons beginning with uridine, leading to the formation of N6-(dimethylallyl)adenosine (i(6)A). This Sulfurovum sp. (strain NBC37-1) protein is tRNA dimethylallyltransferase.